Reading from the N-terminus, the 121-residue chain is Small ribosomal subunit protein uS13 (121 aa).

The disordered stretch occupies residues 88 to 121 (GMRHRRGLPVRGQHTKNNARTRKGKAVAIANKKK).

This sequence belongs to the universal ribosomal protein uS13 family. Part of the 30S ribosomal subunit. Forms a loose heterodimer with protein S19. Forms two bridges to the 50S subunit in the 70S ribosome.

Located at the top of the head of the 30S subunit, it contacts several helices of the 16S rRNA. In the 70S ribosome it contacts the 23S rRNA (bridge B1a) and protein L5 of the 50S subunit (bridge B1b), connecting the 2 subunits; these bridges are implicated in subunit movement. Contacts the tRNAs in the A and P-sites. This Limosilactobacillus reuteri subsp. reuteri (strain JCM 1112) (Lactobacillus reuteri) protein is Small ribosomal subunit protein uS13.